Consider the following 701-residue polypeptide: Elongation factor G (701 aa).

The tr-type G domain occupies 8-286; it reads DRVRNIGIIA…AVVLLLPSPL (279 aa). GTP-binding positions include 17-24, 85-89, and 139-142; these read AHIDAGKT, DTPGH, and NKMD.

This sequence belongs to the TRAFAC class translation factor GTPase superfamily. Classic translation factor GTPase family. EF-G/EF-2 subfamily.

The protein localises to the cytoplasm. Functionally, catalyzes the GTP-dependent ribosomal translocation step during translation elongation. During this step, the ribosome changes from the pre-translocational (PRE) to the post-translocational (POST) state as the newly formed A-site-bound peptidyl-tRNA and P-site-bound deacylated tRNA move to the P and E sites, respectively. Catalyzes the coordinated movement of the two tRNA molecules, the mRNA and conformational changes in the ribosome. This Herpetosiphon aurantiacus (strain ATCC 23779 / DSM 785 / 114-95) protein is Elongation factor G.